The primary structure comprises 532 residues: uncharacterized protein (532 aa).

The next 13 helical transmembrane spans lie at 13 to 33, 53 to 73, 80 to 100, 111 to 131, 142 to 162, 169 to 189, 203 to 223, 231 to 251, 273 to 293, 306 to 326, 334 to 354, 361 to 381, and 483 to 503; these read MSLLIVLMAGLFLAILNQTLL, WLTTGYMLVNGVLIPLSAFLI, SLFLVAMFCFTLGTLVCGIAP, IQAVGGGILQPLVMTTILLIF, IFGLAMMFAPAVGPTLSGWII, IMFYGLVPIGAIVIIVAFFIF, LGAILSIVGFASLLYGVSEAG, IVLSTVIIGAIAIVAFVVQQL, VINIIITVALYTGMFLLPIYL, LLLLPGAIVMLIMSPISGILF, LAIIGLLVTVVTTYQYTQLTI, IMLIYSIRAFGMSLLMMPVMT, and INDAFMWATLFCVAGLILSIF.

This sequence belongs to the major facilitator superfamily. EmrB family.

It localises to the cell membrane. This is an uncharacterized protein from Bacillus subtilis (strain 168).